Reading from the N-terminus, the 101-residue chain is Secreted RxLR effector protein 64 (101 aa).

The signal sequence occupies residues 1–23 (MMSPPMTTTLMFILNYAIISFHG). The short motif at 48-51 (RELR) is the RxLR element. Residues 67–87 (LQPILPLPLCLPFPLVPASIF) form a helical membrane-spanning segment.

This sequence belongs to the RxLR effector family.

The protein localises to the secreted. It localises to the host cytoplasm. It is found in the host nucleus. The protein resides in the membrane. Functionally, effector that acts as a broad suppressor of cell death to interrupt plant immunity. Inhibits cell death induced by cell death-inducing proteins, including the PAMP elicitor INF1 from P.infestans. The sequence is that of Secreted RxLR effector protein 64 from Plasmopara viticola (Downy mildew of grapevine).